The chain runs to 146 residues: MAQERPSCAVEPEHVQRLLLSSREAKKSAYCPYSRFPVGAALLTGDGRIFSGCNIENACYPLGVCAERTAIQKAISEGYKDFRAIAISSDLQEEFISPCGACRQVMREFGTDWAVYMTKPDGTFVVRTVQELLPASFGPEDLQKIQ.

The region spanning 13 to 140 (EHVQRLLLSS…ELLPASFGPE (128 aa)) is the CMP/dCMP-type deaminase domain. Residue 54-56 (NIE) participates in substrate binding. Cys-65 contacts Zn(2+). The active-site Proton donor is Glu-67. Residues Cys-99 and Cys-102 each coordinate Zn(2+).

It belongs to the cytidine and deoxycytidylate deaminase family. In terms of assembly, homotetramer. It depends on Zn(2+) as a cofactor.

The catalysed reaction is cytidine + H2O + H(+) = uridine + NH4(+). The enzyme catalyses 2'-deoxycytidine + H2O + H(+) = 2'-deoxyuridine + NH4(+). Functionally, this enzyme scavenges exogenous and endogenous cytidine and 2'-deoxycytidine for UMP synthesis. The sequence is that of Cytidine deaminase (Cda) from Mus musculus (Mouse).